Consider the following 390-residue polypeptide: Aspergillopepsin-1 (390 aa).

A signal peptide spans 1–19; that stretch reads MVNTSLLAALTAYAVAVAA. A propeptide spans 20–67 (activation peptide); it reads APTAPQVKGFSVNQVAVPKGVYRHPAAQLAKAYGKYHATVPTQVAAAA. In terms of domain architecture, Peptidase A1 spans 84 to 387; it reads YITQVTVGDD…DASGPRLGFA (304 aa). Catalysis depends on residues Asp-100 and Asp-281.

The protein belongs to the peptidase A1 family. Monomer.

The protein localises to the secreted. The enzyme catalyses Hydrolysis of proteins with broad specificity. Generally favors hydrophobic residues in P1 and P1', but also accepts Lys in P1, which leads to activation of trypsinogen. Does not clot milk.. With respect to regulation, inhibited by the microbial peptide pepstatin A. Functionally, secreted aspartic endopeptidase that allows assimilation of proteinaceous substrates. The scissile peptide bond is attacked by a nucleophilic water molecule activated by two aspartic residues in the active site. Shows a broad primary substrate specificity. Favors hydrophobic residues at the P1 and P1' positions, but also accepts a lysine residue in the P1 position, leading to the activation of trypsinogen and chymotrypsinogen A. Hydrolyzes myoglobin, hemoglobin and other natural proteins. Hydrolyzes equine myoglobin between positions 'Met-1' and 'Gly-2', 'Lys-43' and 'Phe-44', and 'Leu-70' and 'Thr-71'. In Aspergillus pseudoglaucus (Eurotium repens), this protein is Aspergillopepsin-1 (pepA).